The primary structure comprises 401 residues: tRNA(Met) cytidine acetate ligase (401 aa).

Residues 7–20, Gly102, Asn164, and Arg189 each bind ATP; that span reads IVEYNPLHNGHLYH.

Belongs to the TmcAL family.

It localises to the cytoplasm. It carries out the reaction cytidine(34) in elongator tRNA(Met) + acetate + ATP = N(4)-acetylcytidine(34) in elongator tRNA(Met) + AMP + diphosphate. In terms of biological role, catalyzes the formation of N(4)-acetylcytidine (ac(4)C) at the wobble position of elongator tRNA(Met), using acetate and ATP as substrates. First activates an acetate ion to form acetyladenylate (Ac-AMP) and then transfers the acetyl group to tRNA to form ac(4)C34. This Caldanaerobacter subterraneus subsp. tengcongensis (strain DSM 15242 / JCM 11007 / NBRC 100824 / MB4) (Thermoanaerobacter tengcongensis) protein is tRNA(Met) cytidine acetate ligase.